The sequence spans 240 residues: Acyl-coenzyme A thioesterase THEM4 (240 aa).

The transit peptide at 1 to 36 (MLRSCAARLRTLGALCLPPVGRRLPGSEPRPELRSF) directs the protein to the mitochondrion. A phosphoserine mark is found at serine 37 and serine 38. Residues lysine 55 and lysine 66 each carry the N6-succinyllysine modification. Lysine 74 carries the N6-acetyllysine modification. Position 98 is an N6-succinyllysine (lysine 98). Residue aspartate 161 is the Proton donor/acceptor of the active site. Substrate contacts are provided by residues asparagine 183, lysine 185, and 206–207 (RK). Lysine 207 carries the N6-succinyllysine modification.

The protein belongs to the THEM4/THEM5 thioesterase family. Homodimer and homotetramer. Interacts with AKT1 in the cytosol. In terms of processing, phosphorylated. In terms of tissue distribution, expressed predominantly in skeletal muscle, testis, uterus, brain and kidney. Down-regulated in glioblastoma or glioma compared to non-neoplastic brain due to promoter hypermethylation.

It is found in the cell membrane. The protein localises to the cell projection. It localises to the ruffle membrane. The protein resides in the cytoplasm. Its subcellular location is the mitochondrion. It is found in the mitochondrion inner membrane. The protein localises to the mitochondrion intermembrane space. The enzyme catalyses hexadecanoyl-CoA + H2O = hexadecanoate + CoA + H(+). It catalyses the reaction octanoyl-CoA + H2O = octanoate + CoA + H(+). The catalysed reaction is decanoyl-CoA + H2O = decanoate + CoA + H(+). It carries out the reaction dodecanoyl-CoA + H2O = dodecanoate + CoA + H(+). The enzyme catalyses tetradecanoyl-CoA + H2O = tetradecanoate + CoA + H(+). It catalyses the reaction (9Z)-octadecenoyl-CoA + H2O = (9Z)-octadecenoate + CoA + H(+). The catalysed reaction is (5Z,8Z,11Z,14Z)-eicosatetraenoyl-CoA + H2O = (5Z,8Z,11Z,14Z)-eicosatetraenoate + CoA + H(+). Has acyl-CoA thioesterase activity towards medium and long-chain (C14 to C18) fatty acyl-CoA substrates, and probably plays a role in mitochondrial fatty acid metabolism. Plays a role in the apoptotic process, possibly via its regulation of AKT1 activity. According to PubMed:11598301, inhibits AKT1 phosphorylation and activity. According to PubMed:17615157, enhances AKT1 activity by favoring its phosphorylation and translocation to plasma membrane. The sequence is that of Acyl-coenzyme A thioesterase THEM4 (THEM4) from Homo sapiens (Human).